Reading from the N-terminus, the 543-residue chain is uncharacterized protein (543 aa).

A TRAM domain is found at 1–59 (MLKKNDIVEVEIVDLTHEGAGVAKVDGLVFFVENALPSEKILMRVLKVNKKIGFGKVEK). S-adenosyl-L-methionine-binding residues include Gln-283, Tyr-312, Glu-333, and Asp-381. Cys-408 acts as the Nucleophile in catalysis.

It belongs to the class I-like SAM-binding methyltransferase superfamily. RNA M5U methyltransferase family.

This is an uncharacterized protein from Streptococcus pneumoniae serotype 4 (strain ATCC BAA-334 / TIGR4).